The chain runs to 162 residues: Small ribosomal subunit protein uS7m (162 aa).

The protein belongs to the universal ribosomal protein uS7 family. Part of the small ribosomal subunit.

The protein resides in the mitochondrion. Functionally, one of the primary rRNA binding proteins, it binds directly to 16S-like rRNA where it nucleates assembly of the head domain of the small subunit. This chain is Small ribosomal subunit protein uS7m (mrps7), found in Dictyostelium discoideum (Social amoeba).